Here is a 222-residue protein sequence, read N- to C-terminus: Pyridoxine/pyridoxamine 5'-phosphate oxidase (222 aa).

Residues 16-19 (RVSY) and lysine 75 each bind substrate. FMN is bound by residues 70 to 75 (RTVLCK), 85 to 86 (FT), lysine 92, and glutamine 114. Tyrosine 132, arginine 136, and serine 140 together coordinate substrate. FMN contacts are provided by residues 149–150 (QS) and tryptophan 195. Substrate is bound at residue 201-203 (RLH). Arginine 205 lines the FMN pocket.

Belongs to the pyridoxamine 5'-phosphate oxidase family. Homodimer. FMN serves as cofactor.

The catalysed reaction is pyridoxamine 5'-phosphate + O2 + H2O = pyridoxal 5'-phosphate + H2O2 + NH4(+). It catalyses the reaction pyridoxine 5'-phosphate + O2 = pyridoxal 5'-phosphate + H2O2. The protein operates within cofactor metabolism; pyridoxal 5'-phosphate salvage; pyridoxal 5'-phosphate from pyridoxamine 5'-phosphate: step 1/1. Its pathway is cofactor metabolism; pyridoxal 5'-phosphate salvage; pyridoxal 5'-phosphate from pyridoxine 5'-phosphate: step 1/1. Functionally, catalyzes the oxidation of either pyridoxine 5'-phosphate (PNP) or pyridoxamine 5'-phosphate (PMP) into pyridoxal 5'-phosphate (PLP). The protein is Pyridoxine/pyridoxamine 5'-phosphate oxidase of Saccharopolyspora erythraea (strain ATCC 11635 / DSM 40517 / JCM 4748 / NBRC 13426 / NCIMB 8594 / NRRL 2338).